The chain runs to 1762 residues: Non-reducing polyketide synthase PKS8-1 (1762 aa).

The N-terminal acylcarrier protein transacylase domain (SAT) stretch occupies residues D17–G247. One can recognise a Ketosynthase family 3 (KS3) domain in the interval Q385–E819. Active-site for beta-ketoacyl synthase activity residues include C558, H694, and H737. The segment at F920–A1240 is malonyl-CoA:ACP transacylase (MAT) domain. The segment at T1308–S1622 is product template (PT) domain. Positions Q1312–W1448 are N-terminal hotdog fold. A PKS/mFAS DH domain is found at Q1312 to N1618. Residue H1344 is the Proton acceptor; for dehydratase activity of the active site. The interval A1471–N1618 is C-terminal hotdog fold. D1529 serves as the catalytic Proton donor; for dehydratase activity. Residues R1632–S1689 form a disordered region. A compositionally biased stretch (pro residues) spans P1671–A1680. Residues D1685–Y1762 enclose the Carrier domain. An O-(pantetheine 4'-phosphoryl)serine modification is found at S1722.

It carries out the reaction holo-[ACP] + 8 malonyl-CoA + 8 H(+) = atrochrysone carboxyl-[ACP] + 8 CO2 + 8 CoA + 2 H2O. It participates in secondary metabolite biosynthesis. Functionally, non-reducing polyketide synthase; part of the gene cluster that mediates the biosynthesis of an emodin derivative that may be involved in black Sigatoka disease of banana. The pathway begins with the synthesis of atrochrysone thioester by the polyketide synthase PKS8-1. The atrochrysone carboxyl ACP thioesterase MYCFIDRAFT_190111 then breaks the thioester bond and releases the atrochrysone carboxylic acid from PKS8-1. The decarboxylase MYCFIDRAFT_34057 then catalyzes the concerted decarboxylation-elimination required to convert atochrysone carboxylic acid into emodin anthrone, which is further oxidized to emodin by the anthrone oxygenase MYCFIDRAFT_34418. The functions of the other tailoring enzymes as well as the final product of the cluster have still to be identified. This is Non-reducing polyketide synthase PKS8-1 (PKS8-1) from Pseudocercospora fijiensis (strain CIRAD86) (Black leaf streak disease fungus).